We begin with the raw amino-acid sequence, 140 residues long: Small ribosomal subunit protein uS12 (140 aa).

Asp-103 is subject to 3-methylthioaspartic acid. The interval 120-140 (GVQKRMQARSKYGAKRPKKGK) is disordered. Residues 125-140 (MQARSKYGAKRPKKGK) show a composition bias toward basic residues.

Belongs to the universal ribosomal protein uS12 family. As to quaternary structure, part of the 30S ribosomal subunit. Contacts proteins S8 and S17. May interact with IF1 in the 30S initiation complex.

In terms of biological role, with S4 and S5 plays an important role in translational accuracy. Interacts with and stabilizes bases of the 16S rRNA that are involved in tRNA selection in the A site and with the mRNA backbone. Located at the interface of the 30S and 50S subunits, it traverses the body of the 30S subunit contacting proteins on the other side and probably holding the rRNA structure together. The combined cluster of proteins S8, S12 and S17 appears to hold together the shoulder and platform of the 30S subunit. The protein is Small ribosomal subunit protein uS12 of Desulfitobacterium hafniense (strain Y51).